The sequence spans 347 residues: Tyrosine recombinase XerC 2 (347 aa).

The Core-binding (CB) domain occupies 17–108 (LVLTRYMEAH…PLKTWFKWLA (92 aa)). A Tyr recombinase domain is found at 125-313 (KLPKHLPRAI…SIEHLRAIHD (189 aa)). Residues Arg170, Lys195, His265, Arg268, and His291 contribute to the active site. Tyr300 functions as the O-(3'-phospho-DNA)-tyrosine intermediate in the catalytic mechanism.

Belongs to the 'phage' integrase family.

It localises to the cytoplasm. In terms of biological role, site-specific tyrosine recombinase, which acts by catalyzing the cutting and rejoining of the recombining DNA molecules. The protein is Tyrosine recombinase XerC 2 of Ralstonia nicotianae (strain ATCC BAA-1114 / GMI1000) (Ralstonia solanacearum).